We begin with the raw amino-acid sequence, 394 residues long: Elongation factor Tu (394 aa).

Residues 10–204 form the tr-type G domain; that stretch reads KLHINVGTIG…VLDSYIPEPK (195 aa). The G1 stretch occupies residues 19–26; sequence GHVDHGKT. Residue 19-26 coordinates GTP; the sequence is GHVDHGKT. Threonine 26 contacts Mg(2+). Positions 60-64 are G2; that stretch reads GITIN. The interval 81 to 84 is G3; it reads DCPG. Residues 81-85 and 136-139 contribute to the GTP site; these read DCPGH and NKCD. Residues 136–139 are G4; the sequence is NKCD. The tract at residues 174–176 is G5; sequence SAL.

It belongs to the TRAFAC class translation factor GTPase superfamily. Classic translation factor GTPase family. EF-Tu/EF-1A subfamily. As to quaternary structure, monomer.

The protein resides in the cytoplasm. The catalysed reaction is GTP + H2O = GDP + phosphate + H(+). Functionally, GTP hydrolase that promotes the GTP-dependent binding of aminoacyl-tRNA to the A-site of ribosomes during protein biosynthesis. The chain is Elongation factor Tu from Baumannia cicadellinicola subsp. Homalodisca coagulata.